Reading from the N-terminus, the 1018-residue chain is Calcium-transporting ATPase sarcoplasmic/endoplasmic reticulum type (1018 aa).

Topologically, residues 1–48 (MEDGHSKTVDEVLSHFRVDPERGLSLDQVKEYQKKYGPNELPAEEGKT) are cytoplasmic. The helical transmembrane segment at 49 to 69 (LWQLVLEQFDDLLVKILLLAA) threads the bilayer. The Lumenal portion of the chain corresponds to 70-88 (IISFVLALFEEHEGVEAFV). Residues 89–109 (EPFVILLILIANAVVGVWQER) traverse the membrane as a helical segment. The Cytoplasmic segment spans residues 110–252 (NAESAIEALK…EIKTPLQQKL (143 aa)). Residues 253 to 272 (DEFGEQLSKVISLICVAVWA) form a helical membrane-spanning segment. At 273 to 294 (INIGHFNDPAHGGSWIKGAVYY) the chain is on the lumenal side. A helical transmembrane segment spans residues 295-312 (FKIAVALAVAAIPEGLPA). Residues valine 303, alanine 304, isoleucine 306, and glutamate 308 each contribute to the Ca(2+) site. Over 313–756 (VITTCLALGT…EEGRAIYNNM (444 aa)) the chain is Cytoplasmic. The active-site 4-aspartylphosphate intermediate is aspartate 350. Aspartate 702 and aspartate 706 together coordinate Mg(2+). Residues 757 to 776 (KQFIRYLISSNIGEVVSIFL) traverse the membrane as a helical segment. Asparagine 767 and glutamate 770 together coordinate Ca(2+). Residues 777–786 (TAALGLPEAL) lie on the Lumenal side of the membrane. The helical transmembrane segment at 787–807 (IPVQLLWVNLVTDGLPATALG) threads the bilayer. Positions 795, 798, and 799 each coordinate Ca(2+). Residues 808–827 (FNPPDLDIMTKPPRKADEGL) lie on the Cytoplasmic side of the membrane. Residues 828-850 (ISGWLFFRYMAIGGYVGCATVGG) form a helical membrane-spanning segment. Topologically, residues 851-896 (AAWWFMFSETGPQLSYWQLTHHLSCLGGGEEFKGIDCKIFNDPHPM) are lumenal. A helical transmembrane segment spans residues 897–916 (TMALSVLVTIEMLNAMNSLS). Glutamate 907 is a Ca(2+) binding site. Residues 917-929 (ENQSLVQMPPWCN) are Cytoplasmic-facing. The chain crosses the membrane as a helical span at residues 930–948 (IWLIASMCLSFALHFVILY). Over 949–963 (VDVLSTVFQVTPLDG) the chain is Lumenal. A helical membrane pass occupies residues 964–984 (NEWMTVMKFSLPVVLLDEILK). Residues 985-1018 (FVARRISDGESYIKNMHGLVLAWAVFFAYIIWGP) lie on the Cytoplasmic side of the membrane.

Belongs to the cation transport ATPase (P-type) (TC 3.A.3) family.

Its subcellular location is the endoplasmic reticulum membrane. It localises to the sarcoplasmic reticulum membrane. The catalysed reaction is Ca(2+)(in) + ATP + H2O = Ca(2+)(out) + ADP + phosphate + H(+). In terms of biological role, this magnesium-dependent enzyme catalyzes the hydrolysis of ATP coupled with the transport of calcium. The protein is Calcium-transporting ATPase sarcoplasmic/endoplasmic reticulum type of Anopheles gambiae (African malaria mosquito).